We begin with the raw amino-acid sequence, 840 residues long: Protein translocase subunit SecA (840 aa).

Residues Q85, 103–107 (GEGKT), and D492 each bind ATP. The segment at 787–822 (QRERVAKETGASHGGDSQEVKKKPVKKEPKVGRNDL) is disordered. The span at 802 to 819 (DSQEVKKKPVKKEPKVGR) shows a compositional bias: basic and acidic residues. C823, C825, C834, and C835 together coordinate Zn(2+).

It belongs to the SecA family. As to quaternary structure, monomer and homodimer. Part of the essential Sec protein translocation apparatus which comprises SecA, SecYEG and auxiliary proteins SecDF. Other proteins may also be involved. Zn(2+) serves as cofactor.

The protein resides in the cell membrane. Its subcellular location is the cytoplasm. It catalyses the reaction ATP + H2O + cellular proteinSide 1 = ADP + phosphate + cellular proteinSide 2.. Part of the Sec protein translocase complex. Interacts with the SecYEG preprotein conducting channel. Has a central role in coupling the hydrolysis of ATP to the transfer of proteins into and across the cell membrane, serving as an ATP-driven molecular motor driving the stepwise translocation of polypeptide chains across the membrane. In Clostridium perfringens (strain ATCC 13124 / DSM 756 / JCM 1290 / NCIMB 6125 / NCTC 8237 / Type A), this protein is Protein translocase subunit SecA.